We begin with the raw amino-acid sequence, 305 residues long: tRNA pseudouridine synthase B (305 aa).

D48 (nucleophile) is an active-site residue.

It belongs to the pseudouridine synthase TruB family. Type 1 subfamily.

The enzyme catalyses uridine(55) in tRNA = pseudouridine(55) in tRNA. Functionally, responsible for synthesis of pseudouridine from uracil-55 in the psi GC loop of transfer RNAs. In Pseudomonas syringae pv. syringae (strain B728a), this protein is tRNA pseudouridine synthase B.